The chain runs to 672 residues: Transcription factor tau 91 kDa subunit (672 aa).

A required for DNA-binding region spans residues 1–158 (MAVIPAKKRG…SLGQKGRPIR (158 aa)). The a.T hook DNA-binding region spans 6–18 (AKKRGRPRKSVVA). Disordered stretches follow at residues 24 to 45 (SLASPVSENSGSKRPRRNASKK) and 67 to 156 (VNNV…KGRP). Acidic residues predominate over residues 71 to 100 (DDTDDDDFVLNDEGDGEESDNVEIEFENEL). Residues 159–672 (LLKDLSSARD…AGLLTLEYLS (514 aa)) are sufficient for interaction with TFC8. A disulfide bridge connects residues cysteine 375 and cysteine 383.

Heterodimer with TFC8. Component of the TFIIIC complex composed of TFC1, TFC3, TFC4, TFC6, TFC7 and TFC8. The subunits are organized in two globular domains, tauA and tauB, connected by a proteolysis-sensitive and flexible linker. Interacts with TFC1, TFC3, TFC4 and directly with TFC8.

The protein localises to the nucleus. In terms of biological role, TFIIIC mediates tRNA and 5S RNA gene activation by binding to intragenic promoter elements. Upstream of the transcription start site, TFIIIC assembles the initiation complex TFIIIB-TFIIIC-tDNA, which is sufficient for RNA polymerase III recruitment and function. Part of the tauB domain of TFIIIC that binds boxB DNA promoter sites of tRNA and similar genes. Cooperates with TFC3 in DNA binding. The protein is Transcription factor tau 91 kDa subunit (TFC6) of Saccharomyces cerevisiae (strain ATCC 204508 / S288c) (Baker's yeast).